The chain runs to 276 residues: Small ribosomal subunit protein uS5w (276 aa).

Over residues 1–15 (MAERGVERGGDRGDF) the composition is skewed to basic and acidic residues. Residues 1 to 42 (MAERGVERGGDRGDFGRGFGGRGGGRGGPRGRGRRAGRAPEE) are disordered. Positions 16–28 (GRGFGGRGGGRGG) are enriched in gly residues. The 64-residue stretch at 87–150 (LKDEVMKIMP…ILAKLSVVPI (64 aa)) folds into the S5 DRBM domain.

This sequence belongs to the universal ribosomal protein uS5 family.

This chain is Small ribosomal subunit protein uS5w (RPS2D), found in Arabidopsis thaliana (Mouse-ear cress).